Reading from the N-terminus, the 411-residue chain is Putative metal tolerance protein C3 (411 aa).

At 1-115 (MEVNYCPETP…DRAERAAQEL (115 aa)) the chain is on the cytoplasmic side. The helical transmembrane segment at 116–136 (AMQISNWANIFLLALKIYATV) threads the bilayer. Residues 137 to 140 (KSGS) lie on the Vacuolar side of the membrane. The chain crosses the membrane as a helical span at residues 141–161 (IAIAASTLDSLLDLMAGGILW). Over 162–184 (FTHLSMKNVNIYKYPIGKLRVQP) the chain is Cytoplasmic. Residues 185–205 (VGIIIFAAVMATLGFQVLLVA) form a helical membrane-spanning segment. Residues 206-222 (AEQLISNEPSEKMNHVQ) are Vacuolar-facing. Residues 223–243 (LIWLYSIMLSATAIKLVLWIY) form a helical membrane-spanning segment. At 244–262 (CKSSRNHIVRAYAKDHHFD) the chain is on the cytoplasmic side. Residues 263-283 (VVTNVLGLVAAVLANAFYWWL) form a helical membrane-spanning segment. Residues 284-287 (DPTG) lie on the Vacuolar side of the membrane. The chain crosses the membrane as a helical span at residues 288–308 (AILLAIYTIVNWSGTVMENAV). Topologically, residues 309–390 (SLIGQSAPPE…LPEVERAFVH (82 aa)) are cytoplasmic.

Belongs to the cation diffusion facilitator (CDF) transporter (TC 2.A.4) family.

It localises to the vacuole membrane. In terms of biological role, involved in sequestration of excess metal in the cytoplasm into vacuoles to maintain metal homeostasis. This Arabidopsis thaliana (Mouse-ear cress) protein is Putative metal tolerance protein C3 (MTPC3).